The following is a 254-amino-acid chain: MVIANKNIIFVAGLGGIGFDTSREIVKSGPKNLVILDRIENPAAIAELKALNPKVTVTFYPYDVTVSVAETTKLLKTIFDKLKTVDILINGAGILDDYQIERTIAVNFTGTVNTTTAIMSFWDKRKGGPGGIIANICSVTGFNAIYQVPVYSASKAAALSFTNSLAKLAPITGVTAYSINPGITVTPLVHKFNSWLDVEPRVAELLLEHPTQTRLQCAQNFVKAIEANQNGAIWKLDLGTLEAIEWTKHWDSHI.

Phe-10–Leu-33 contributes to the NAD(+) binding site. Ser-138 is a substrate binding site. Tyr-151 functions as the Proton acceptor in the catalytic mechanism.

The protein belongs to the short-chain dehydrogenases/reductases (SDR) family. Homodimer.

It catalyses the reaction a primary alcohol + NAD(+) = an aldehyde + NADH + H(+). It carries out the reaction a secondary alcohol + NAD(+) = a ketone + NADH + H(+). The protein is Alcohol dehydrogenase 2 (Adh2) of Drosophila wheeleri (Fruit fly).